Here is a 628-residue protein sequence, read N- to C-terminus: Dual specificity testis-specific protein kinase 1 (628 aa).

Residues 1–35 (MAGERPPLRGPGPGETPVEGPGGAGGGPGRGRPSS) form a disordered region. Gly residues predominate over residues 20–30 (GPGGAGGGPGR). One can recognise a Protein kinase domain in the interval 52 to 310 (FDCAEKIGAG…EITQHLEQIL (259 aa)). ATP contacts are provided by residues 58–66 (IGAGFFSEV) and Lys-81. The active-site Proton acceptor is the Asp-170. At Ser-215 the chain carries Phosphoserine; by autocatalysis. 3 disordered regions span residues 330 to 376 (TYNQ…DNLT), 424 to 490 (PESL…QLPL), and 538 to 568 (RAQHSLPRAAALERTEPSPPPSAPREQEEGL). Omega-N-methylarginine is present on Arg-338. Basic and acidic residues predominate over residues 348 to 357 (SDPRLSRSRS). The segment at 421–526 (VASPESLVQP…NNNPPAVVVN (106 aa)) is required for interaction with YWHAB. Residue Ser-439 is modified to Phosphoserine. Pro residues predominate over residues 478-487 (EPEPPGPAPQ). The interval 529–626 (QGWAREPWNR…PTPSLQLPGA (98 aa)) is required for interaction with PARVA. Residues 529–628 (QGWAREPWNR…PSLQLPGARS (100 aa)) form a required for interaction with SPRED1 and SPRY2. Required for TESK1-mediated dephosphorylation of SPRY2 and SPRY2 inhibition of ERK phosphorylation region.

The protein belongs to the protein kinase superfamily. TKL Ser/Thr protein kinase family. As to quaternary structure, interacts (via both C- and N-termini) with SPRY4 (via C-terminus); the interaction inhibits TESK1 kinase activity. Interacts with TAOK1; the interaction inhibits TAOK1 kinase activity. Interacts (via C-terminus) with SPRED1 (via C-terminus); the interaction inhibits TESK1 kinase activity. Interacts (via C-terminus) with PARVA/PARVIN (via C-terminus); the interaction inhibits TESK1 kinase activity. Interacts with YWHAB/14-3-3 beta; the interaction is dependent on the phosphorylation of TESK1 Ser-439 and inhibits TESK1 kinase activity. Interacts with SPRY1, SPRY3 and SPRED2. Interacts (via C-terminus) with SPRY2 (via C-terminus); the interaction disrupts SPRY2 interaction with PPP2CA/PP2A-C, possibly by vesicular sequestration of SPRY2. Therefore dephosphorylation of SPRY2 by the serine/threonine-protein phosphatase 2A (PP2A) holoenzyme is lost, inhibiting its interaction with GRB2. Requires Mg(2+) as cofactor. Mn(2+) serves as cofactor. Autophosphorylated on serine and tyrosine residues. In terms of tissue distribution, weakly expressed in sciatic nerves (at protein level). Highly expressed in testicular germ cells. Expressed at low levels in brain, lung, heart, liver and kidney.

It localises to the cytoplasm. The protein resides in the perinuclear region. It is found in the cytoskeleton. The protein localises to the microtubule organizing center. Its subcellular location is the centrosome. It localises to the cell projection. The protein resides in the lamellipodium. The enzyme catalyses L-seryl-[protein] + ATP = O-phospho-L-seryl-[protein] + ADP + H(+). It carries out the reaction L-threonyl-[protein] + ATP = O-phospho-L-threonyl-[protein] + ADP + H(+). It catalyses the reaction L-tyrosyl-[protein] + ATP = O-phospho-L-tyrosyl-[protein] + ADP + H(+). Activated by autophosphorylation on Ser-215. Kinase activity is inhibited by SPRED1. Functionally, dual specificity protein kinase activity catalyzing autophosphorylation and phosphorylation of exogenous substrates on both serine/threonine and tyrosine residues. Regulates the cellular cytoskeleton by enhancing actin stress fiber formation via phosphorylation of cofilin and by preventing microtubule breakdown via inhibition of TAOK1/MARKK kinase activity. Inhibits podocyte motility via regulation of actin cytoskeletal dynamics and phosphorylation of CFL1. Positively regulates integrin-mediated cell spreading, via phosphorylation of cofilin. Suppresses ciliogenesis via multiple pathways; phosphorylation of CFL1, suppression of ciliary vesicle directional trafficking to the ciliary base, and by facilitating YAP1 nuclear localization where it acts as a transcriptional corepressor of the TEAD4 target genes AURKA and PLK1. Probably plays a central role at and after the meiotic phase of spermatogenesis. The protein is Dual specificity testis-specific protein kinase 1 (Tesk1) of Rattus norvegicus (Rat).